Reading from the N-terminus, the 70-residue chain is uncharacterized protein (70 aa).

Residues 15–37 (LLVSSISESAVALIIITIRILFS) form a helical membrane-spanning segment.

It is found in the membrane. This is an uncharacterized protein from Saccharomyces cerevisiae (strain ATCC 204508 / S288c) (Baker's yeast).